Reading from the N-terminus, the 268-residue chain is Aliphatic sulfonates import ATP-binding protein SsuB 2 (268 aa).

One can recognise an ABC transporter domain in the interval 15 to 236 (LAVRKLQKTF…VRGSHRLAAL (222 aa)). 47–54 (GRSGCGKS) is an ATP binding site.

The protein belongs to the ABC transporter superfamily. Aliphatic sulfonates importer (TC 3.A.1.17.2) family. The complex is composed of two ATP-binding proteins (SsuB), two transmembrane proteins (SsuC) and a solute-binding protein (SsuA).

The protein localises to the cell inner membrane. It catalyses the reaction ATP + H2O + aliphatic sulfonate-[sulfonate-binding protein]Side 1 = ADP + phosphate + aliphatic sulfonateSide 2 + [sulfonate-binding protein]Side 1.. Functionally, part of the ABC transporter complex SsuABC involved in aliphatic sulfonates import. Responsible for energy coupling to the transport system. In Pseudomonas fluorescens (strain ATCC BAA-477 / NRRL B-23932 / Pf-5), this protein is Aliphatic sulfonates import ATP-binding protein SsuB 2.